We begin with the raw amino-acid sequence, 350 residues long: MKALVLEEKGKLSLRDFDIPGGAGSGELGPKDVRIRTHTVGICGSDVHYYTHGKIGHFVVNAPMVLGHEASGTVIETGSDVTHLKIGDRVCMEPGIPDPTSRASKLGIYNVDPAVRFWATPPIHGCLTPEVIHPAAFTYKLPDNVSFAEGAMVEPFAIGMQAALRARIQPGDIAVVTGAGPIGMMVALAALAGGCAKVIVADLAQPKLDIIAAYDGIETINIRERNLAEAVSAATDGWGCDIVFECSGAAPAILGMAKLARPGGAIVLVGMPVDPVPVDIVGLQAKELRVETVFRYANVYDRAVALIASGKVDLKPLISATIPFEDSIAGFDRAVEARETDVKLQIVMPQ.

Residues Cys-43, His-68, and Glu-154 each contribute to the Zn(2+) site.

The protein belongs to the zinc-containing alcohol dehydrogenase family. Requires Zn(2+) as cofactor.

It carries out the reaction xylitol + NAD(+) = D-xylulose + NADH + H(+). The chain is Putative D-xylulose reductase from Agrobacterium fabrum (strain C58 / ATCC 33970) (Agrobacterium tumefaciens (strain C58)).